The sequence spans 197 residues: Putative NADH dehydrogenase/NAD(P)H nitroreductase Plav_3612 (197 aa).

Belongs to the nitroreductase family. HadB/RutE subfamily. It depends on FMN as a cofactor.

The sequence is that of Putative NADH dehydrogenase/NAD(P)H nitroreductase Plav_3612 from Parvibaculum lavamentivorans (strain DS-1 / DSM 13023 / NCIMB 13966).